The sequence spans 165 residues: Neurotrophin-3 (165 aa).

Residues 1-3 (IQS) form the signal peptide. The propeptide occupies 4 to 119 (TSMDQGSLSE…VLNRTSRRKR (116 aa)). Residues 32 to 61 (KVPKQAARTKDGTQTTAKKTEAEPEATANK) form a disordered region. The N-linked (GlcNAc...) asparagine glycan is linked to N112.

Belongs to the NGF-beta family.

The protein resides in the secreted. Functionally, seems to promote the survival of visceral and proprioceptive sensory neurons. This chain is Neurotrophin-3 (NTF3), found in Xenopeltis unicolor (Sunbeam snake).